The sequence spans 294 residues: MLQITLPTHVHARLADYARLLRIDRPIGTLLLLWPTYWALWLAAEGGPSFANLVIFTLGVFFMRAAGCAINDFADRDWDRHVKRTKDRPLTAGRVRAWEAVALFAGLCLVSFLMVVLFTNTLTLYLSFGGALLAFIYPFMKRYTHLPQLFLGAAFSWAIPMAWAAEANQLSQLTWLLFTANVLWTVAYDTLYAMVDRDDDLKVGIKSTAILFGDADRAIIALLQTMVVVILVMVGQRAELGSFYYLGVVAMATLFVYHQYLARERNREGCFKAFLNNNWAGFAVFLGLALDLAF.

8 helical membrane-spanning segments follow: residues Leu-20–Leu-42, Trp-98–Phe-118, Asn-120–Met-140, His-145–Ala-165, Trp-175–Val-195, Ala-218–Ala-238, Ser-242–Ala-262, and Phe-274–Phe-294.

It belongs to the UbiA prenyltransferase family. The cofactor is Mg(2+).

Its subcellular location is the cell inner membrane. It catalyses the reaction all-trans-octaprenyl diphosphate + 4-hydroxybenzoate = 4-hydroxy-3-(all-trans-octaprenyl)benzoate + diphosphate. Its pathway is cofactor biosynthesis; ubiquinone biosynthesis. In terms of biological role, catalyzes the prenylation of para-hydroxybenzoate (PHB) with an all-trans polyprenyl group. Mediates the second step in the final reaction sequence of ubiquinone-8 (UQ-8) biosynthesis, which is the condensation of the polyisoprenoid side chain with PHB, generating the first membrane-bound Q intermediate 3-octaprenyl-4-hydroxybenzoate. In Marinobacter nauticus (strain ATCC 700491 / DSM 11845 / VT8) (Marinobacter aquaeolei), this protein is 4-hydroxybenzoate octaprenyltransferase.